The chain runs to 218 residues: Thiopurine S-methyltransferase (218 aa).

S-adenosyl-L-methionine contacts are provided by Trp10, Leu45, Glu66, and Arg123.

This sequence belongs to the class I-like SAM-binding methyltransferase superfamily. TPMT family.

Its subcellular location is the cytoplasm. It carries out the reaction S-adenosyl-L-methionine + a thiopurine = S-adenosyl-L-homocysteine + a thiopurine S-methylether.. Its function is as follows. Involved in the biological cycling of tellurium and selenium. Tellurium resistance (Ter) mechanism. The polypeptide is Thiopurine S-methyltransferase (Pseudomonas syringae pv. pisi).